Consider the following 334-residue polypeptide: MAFNLRNRSFVKELDFTPQELMFLITLAADLKAAKYAGTEQPQLSGKNIALIFEKTSTRTRCAFEVAAHDQGAHVTYLDPSGSQIGHKESIKDTARVLGRMFDAIEYRGASQATVEELAEYAGVPVWNGLTDEWHPTQMLADFLTIMEHTDKPLREVTLAYMGDARNNLGNSLTVTGAMLGIDVRMVAPRELWPDEERVAAPARAIAETTGARVTFTDDIAEGLAGADFIYTDVWVSMGEPSEVWDERIRQLLPYQVNAEALKATGNPDVKFLHCLPAFHDLGTEVAREIHARTGLTALEVTDEVFESPASIVFDQAENRMHTIKALMVATLGR.

Residues 57–60, glutamine 84, arginine 108, and 135–138 each bind carbamoyl phosphate; these read STRT and HPTQ. L-ornithine is bound by residues asparagine 168, aspartate 233, and 237–238; that span reads SM. Carbamoyl phosphate is bound by residues 275–276 and arginine 320; that span reads CL.

This sequence belongs to the aspartate/ornithine carbamoyltransferase superfamily. OTCase family.

The protein localises to the cytoplasm. It carries out the reaction carbamoyl phosphate + L-ornithine = L-citrulline + phosphate + H(+). It functions in the pathway amino-acid biosynthesis; L-arginine biosynthesis; L-arginine from L-ornithine and carbamoyl phosphate: step 1/3. Reversibly catalyzes the transfer of the carbamoyl group from carbamoyl phosphate (CP) to the N(epsilon) atom of ornithine (ORN) to produce L-citrulline. The protein is Ornithine carbamoyltransferase of Thermobifida fusca (strain YX).